We begin with the raw amino-acid sequence, 220 residues long: Guanylate kinase (220 aa).

The Guanylate kinase-like domain occupies 16 to 195 (GLMFVLSSPS…AFESVRSILR (180 aa)). Residue 23–30 (SPSGAGKT) participates in ATP binding.

The protein belongs to the guanylate kinase family.

It is found in the cytoplasm. It catalyses the reaction GMP + ATP = GDP + ADP. In terms of biological role, essential for recycling GMP and indirectly, cGMP. In Rhodopseudomonas palustris (strain ATCC BAA-98 / CGA009), this protein is Guanylate kinase.